The primary structure comprises 72 residues: Large ribosomal subunit protein uL29 (72 aa).

Belongs to the universal ribosomal protein uL29 family.

In Chlamydia abortus (strain DSM 27085 / S26/3) (Chlamydophila abortus), this protein is Large ribosomal subunit protein uL29.